Reading from the N-terminus, the 196-residue chain is MYLIPTVIEQTNRGERAYDIYSRLLKDRIIFLGSPIDDQVANSIVSQLLFLAAEDPEKDISLYINSPGGSITAGLAIYDTMQFIKPDVSTICIGMAASMGAFLLAAGAKGKRFALPNSEVMIHQPLGGAQGQATEIEIAAKRILFLRDKLNRILAENTGQPIEVIERDTDRDNFMTAQKAQEYGIIDRVLTRLEDK.

S98 acts as the Nucleophile in catalysis. Residue H123 is part of the active site.

Belongs to the peptidase S14 family. Fourteen ClpP subunits assemble into 2 heptameric rings which stack back to back to give a disk-like structure with a central cavity, resembling the structure of eukaryotic proteasomes.

Its subcellular location is the cytoplasm. The enzyme catalyses Hydrolysis of proteins to small peptides in the presence of ATP and magnesium. alpha-casein is the usual test substrate. In the absence of ATP, only oligopeptides shorter than five residues are hydrolyzed (such as succinyl-Leu-Tyr-|-NHMec, and Leu-Tyr-Leu-|-Tyr-Trp, in which cleavage of the -Tyr-|-Leu- and -Tyr-|-Trp bonds also occurs).. Cleaves peptides in various proteins in a process that requires ATP hydrolysis. Has a chymotrypsin-like activity. Plays a major role in the degradation of misfolded proteins. The sequence is that of ATP-dependent Clp protease proteolytic subunit from Geobacillus thermodenitrificans (strain NG80-2).